Consider the following 310-residue polypeptide: Cysteine synthase (310 aa).

Residue K46 is modified to N6-(pyridoxal phosphate)lysine. Pyridoxal 5'-phosphate contacts are provided by residues N76, 180–184, and S268; that span reads GTGGT.

This sequence belongs to the cysteine synthase/cystathionine beta-synthase family. As to quaternary structure, homodimer. Pyridoxal 5'-phosphate serves as cofactor.

The enzyme catalyses O-acetyl-L-serine + hydrogen sulfide = L-cysteine + acetate. It participates in amino-acid biosynthesis; L-cysteine biosynthesis; L-cysteine from L-serine: step 2/2. The polypeptide is Cysteine synthase (cysK) (Staphylococcus aureus (strain Mu50 / ATCC 700699)).